Reading from the N-terminus, the 444-residue chain is Trigger factor (444 aa).

The PPIase FKBP-type domain maps to 163–248; the sequence is GDFLTVDFVG…AKALKKAVAP (86 aa).

It belongs to the FKBP-type PPIase family. Tig subfamily.

It localises to the cytoplasm. It catalyses the reaction [protein]-peptidylproline (omega=180) = [protein]-peptidylproline (omega=0). In terms of biological role, involved in protein export. Acts as a chaperone by maintaining the newly synthesized protein in an open conformation. Functions as a peptidyl-prolyl cis-trans isomerase. The chain is Trigger factor from Granulibacter bethesdensis (strain ATCC BAA-1260 / CGDNIH1).